Reading from the N-terminus, the 166-residue chain is FMN reductase (NADH) RutF (166 aa).

It belongs to the non-flavoprotein flavin reductase family. RutF subfamily.

The catalysed reaction is FMNH2 + NAD(+) = FMN + NADH + 2 H(+). Functionally, catalyzes the reduction of FMN to FMNH2 which is used to reduce pyrimidine by RutA via the Rut pathway. In Cronobacter sakazakii (strain ATCC BAA-894) (Enterobacter sakazakii), this protein is FMN reductase (NADH) RutF.